The primary structure comprises 228 residues: Protein 33K (228 aa).

Residues 1-156 form a disordered region; it reads MAPKKKLQLP…GALRLAPNEP (156 aa). Acidic residues predominate over residues 15–53; that stretch reads TDEEEYWDSQAEEVLDEEEEMMEDWDSLDEASEAEEVSD. 2 stretches are compositionally biased toward low complexity: residues 54–63 and 104–119; these read ETPSPSVAFP and AAPTAPAAAAAAATAA. A necessary for nuclear subcellular location region spans residues 171-198; the sequence is YAIFQQSRGQEQELKIKNRSLRSLTRSC. The RS-repeat; required for splicing enhancer activity stretch occupies residues 177-197; that stretch reads SRGQEQELKIKNRSLRSLTRS.

The protein belongs to the adenoviridae splicing factor family. Homooligomer. Interacts with DBP; this interaction occurs at a unique vertex during genome packaging. Interacts with IVa2; this interaction occurs at a unique vertex during genome packaging and seems to potentiate IVa2 and 33K oligomerization. Phosphorylated in vitro by human PKA and PRKDC. PRKDC inhibits, whereas PKA activates the splicing factor.

Its subcellular location is the host nucleus. Promotes alternative splicing of late transcripts by promoting splicing at weak 3' splice sites. Required for the temporal activation of major late pre-mRNA splicing at late times of infection. Induces the splicing and expression of the late capsid vertex protein. Its function is as follows. Probably functions as the small terminase that is part of the molecular motor that translocates genomic DNA in empty capsid during DNA packaging. This motor is located at a unique vertex and comprises at least the IVa2 ATPase, the small terminase 33K and probably a portal. Forms a ring-like structure of about 17 nm in which genomic DNA is translocated into the capsid. Stimulates IVa2 ATPase activity in the presence of the viral genome. Once the DNA is packaged, the terminase detaches: the 33K protein is present in the empty particles, but not in the mature virions. Also involved in virion assembly. The sequence is that of Protein 33K from Homo sapiens (Human).